The chain runs to 782 residues: MTTTDSPSVLQDKDIDRLVNAQKKPQEEPTMKDKALLFEKQRQEKKMKHTEAKMETNPLTSAKTFRKAPTEASTATTKDSTKNVNNATSTNNATSTKNNTKNTPKNTPKNIPKNTTAKPPIPKSAMKPSVPAAAAAVSTSAATAPAATASVSVSEPAAAFSPASHDMASFMTGDTSAAIECLMNGTSTSTPQKSASGISTNKHVNAAASQVNNRSNTSNSFDSHTTQKAGSYNPNITNILSERELDSTDCYADSESRSQPHKPSVLLPTTVLTDNKTPTYPPSPEFFSDHTDARDVRVGASFVNHKQPYNFARNNHGSDVSSAMDNARRQASETRRSNLSSYNDRNQPAAHSYLRTAPNHMEKIRTEVDKEQTREKKLARERLARKQQRDKFDLLQTPQTKNKFNMQVPLDMSEEQLFEVICKLTTQLDQSQARVREVEELVQQCSEQLNERSVEIDSLKSQYEEGQGEKEMLVGQLEEQLKRVSEEKDVELRQATERMEKELNDVTATKDHEIQQLKQQVQDLTIQLSSATVSDVKTLRTDYEHYKSQCYRKDVMISELEARLQREENLEKFETELKDKEKRLIKTELRLGQQALEQDHERQKLEVEKKVLGEKDEEERLRERLRELGSRDRSYNRSSRDRSHDRLYERSPRSRDRSSRDRSRDRYSRSRSRSRYRRRSDSVKDYSVGPRDKGDLRSLALEKIIDFLLARQKAGAQRAHMDACYNVSGPGVRYGDGLSDATVEKVLKEFLNKDEGYLMDLLEGDGKRLDEYLGTIYSGVGV.

3 disordered regions span residues 1 to 127, 205 to 234, and 308 to 355; these read MTTT…SAMK, NAAA…SYNP, and PYNF…SYLR. Residues 24 to 54 are compositionally biased toward basic and acidic residues; it reads KPQEEPTMKDKALLFEKQRQEKKMKHTEAKM. The segment covering 82–118 has biased composition (low complexity); that stretch reads KNVNNATSTNNATSTKNNTKNTPKNTPKNIPKNTTAK. Residues 312-324 are compositionally biased toward polar residues; it reads ARNNHGSDVSSAM. The segment covering 326–336 has biased composition (basic and acidic residues); it reads NARRQASETRR. Residues 337-346 show a composition bias toward polar residues; the sequence is SNLSSYNDRN. Residues 361–628 adopt a coiled-coil conformation; that stretch reads MEKIRTEVDK…ERLRERLREL (268 aa). Residues 629–668 show a composition bias toward basic and acidic residues; that stretch reads GSRDRSYNRSSRDRSHDRLYERSPRSRDRSSRDRSRDRYS. Residues 629-689 are disordered; sequence GSRDRSYNRS…SDSVKDYSVG (61 aa). The span at 669–678 shows a compositional bias: basic residues; that stretch reads RSRSRSRYRR. A compositionally biased stretch (basic and acidic residues) spans 679 to 689; that stretch reads RSDSVKDYSVG.

This is an uncharacterized protein from Yarrowia lipolytica (strain CLIB 122 / E 150) (Yeast).